We begin with the raw amino-acid sequence, 460 residues long: ATP synthase subunit beta (460 aa).

150-157 (GGAGVGKT) provides a ligand contact to ATP.

This sequence belongs to the ATPase alpha/beta chains family. As to quaternary structure, F-type ATPases have 2 components, CF(1) - the catalytic core - and CF(0) - the membrane proton channel. CF(1) has five subunits: alpha(3), beta(3), gamma(1), delta(1), epsilon(1). CF(0) has three main subunits: a(1), b(2) and c(9-12). The alpha and beta chains form an alternating ring which encloses part of the gamma chain. CF(1) is attached to CF(0) by a central stalk formed by the gamma and epsilon chains, while a peripheral stalk is formed by the delta and b chains.

It localises to the cell inner membrane. It carries out the reaction ATP + H2O + 4 H(+)(in) = ADP + phosphate + 5 H(+)(out). In terms of biological role, produces ATP from ADP in the presence of a proton gradient across the membrane. The catalytic sites are hosted primarily by the beta subunits. This chain is ATP synthase subunit beta, found in Yersinia pestis bv. Antiqua (strain Angola).